A 63-amino-acid chain; its full sequence is Cecropin-B (63 aa).

A signal peptide spans 1-22; sequence MNFNKIFVFVALILAISLGNTE. R62 carries the arginine amide modification.

The protein belongs to the cecropin family.

The protein localises to the secreted. Its function is as follows. Cecropins have lytic and antibacterial activity against several Gram-positive and Gram-negative bacteria. In Drosophila simulans (Fruit fly), this protein is Cecropin-B (CecB).